The primary structure comprises 240 residues: Ribonuclease HII (240 aa).

Residues arginine 31–alanine 222 enclose the RNase H type-2 domain. Aspartate 37, glutamate 38, and aspartate 130 together coordinate a divalent metal cation.

It belongs to the RNase HII family. Requires Mn(2+) as cofactor. It depends on Mg(2+) as a cofactor.

The protein localises to the cytoplasm. The enzyme catalyses Endonucleolytic cleavage to 5'-phosphomonoester.. Functionally, endonuclease that specifically degrades the RNA of RNA-DNA hybrids. The protein is Ribonuclease HII of Xanthomonas campestris pv. campestris (strain B100).